A 448-amino-acid polypeptide reads, in one-letter code: MILGTPKADWLAEFPRLADLIALRPSEWFNPAIAPSAEALADVGLGAADVADASARLQRFAPLIARLFPETAASGGIIESDLVEVAAFHDALRQHYAAELPGRLWLKRDSHLPISGSIKARGGIYEVLAHAERLALEHGLIGLDDDYSRLAEADCRAFFARHRIAVGSTGNLGLSIGIIGAALGFQASVHMSADARQWKKDKLRAHGVTVVEYASDYSVAVEQGRREAAGDPYTHFVDDENSRDLFLGYAVAAERLRGQLDAAGIRVDSEHPLFVHLPCGVGGGPGGVAFGLKLAFGDAVHCLFAEPTHSPCMFLGVYTGRHEQVSVQDFGIDNRTAADGLAVGRPSGFVGRAMQRLLDGYYTVDDDELFRLLALLERSQGIRLEPSALAGAPGIARVTREPQGYRERMGLTSARLANATHLVWATGGGMVPETEMRAYLKRGRSLLD.

Lysine 119 is modified (N6-(pyridoxal phosphate)lysine).

The protein belongs to the serine/threonine dehydratase family. DsdA subfamily. Requires pyridoxal 5'-phosphate as cofactor.

The enzyme catalyses D-serine = pyruvate + NH4(+). This is Probable D-serine dehydratase from Pseudomonas aeruginosa (strain UCBPP-PA14).